The sequence spans 510 residues: MWKGFLSKLPRKTSASGRGADLDSGQCSNGAGNGNPIQRTSSCGSIPSGRSTSTIKRMSSAIFPSSVVAGIEPLVSFKDVPNSEKQNLFVSKLNLCCAVFDFSDPNKSSAEKDIKRQTLLDLIDYVDSSSSRFSEAVIAASSRMFAVNLFRVFPPNYRSSSSGGGEGEEEEPMFEPAWCHLQLVYELLLKFIGSSSLDAKVGKKYFDHSFIVKLLNLLDSEDPRERDCLKTILHRIYGKFMVHRPFIRKAVSNIFYHFVFETDRHNGIAELLEVFGSVISGFALPLKEEHKIFLWRVLVPLHKPKSVGVYLQQLTYCVTQFIEKDPKLASSVIIGLLRYWPITNSQKEVMFLSEIEEILETISTAEFQKCMVPLFRRIAQCIKSSHFQVAERALFIWNNDNVISLIAQNRQMIMPIIVPALEHNSQNHWNQAVLNLTDNVKKMFSEMDDVLFSACLVKYKEDEERQASLESKRRLTWEKLESAASFQPVTGHTAVLVGRQPSANLIATLI.

A disordered region spans residues 1–51; that stretch reads MWKGFLSKLPRKTSASGRGADLDSGQCSNGAGNGNPIQRTSSCGSIPSGRS. Positions 25 to 51 are enriched in polar residues; that stretch reads GQCSNGAGNGNPIQRTSSCGSIPSGRS. 2 positions are modified to phosphothreonine: Thr-476 and Thr-493. Ser-502 is subject to Phosphoserine. Thr-508 carries the phosphothreonine modification.

It belongs to the phosphatase 2A regulatory subunit B56 family. In terms of assembly, PP2A consists of a common heteromeric enzyme, composed of a catalytic subunit (subunits C), a constant regulatory subunit (subunit A), and a variety of regulatory subunits such as subunits B (the R2/B/PR55/B55, R3/B''/PR72/PR130/PR59 and R5/B'/B56 families). Interacts with SIT1. Post-translationally, phosphorylated at Thr-476, Thr-493, Ser-502 and Thr-508 by SIT1. In terms of tissue distribution, expressed in root stele and epidermal cells.

Its subcellular location is the cytoplasm. It localises to the cytosol. The protein resides in the cell membrane. In terms of biological role, b regulatory subunit of phosphatase 2A (PP2A) involved in salt stress response. Under salt stress conditions, required for the catalytic activity of PP2A and the dephosphorylation of SIT1, a negative regulator of salt tolerance. Dephosphorylation of SIT1 turns off salt-induced SIT1 activity directly, which has a positive effect on salt tolerance. This chain is Serine/threonine protein phosphatase 2A 57 kDa regulatory subunit B' kappa isoform, found in Oryza sativa subsp. japonica (Rice).